The primary structure comprises 232 residues: MKINTKSKKVNKAWFNDHIHDTYVKLAHKEGYRSRAAYKIKEIDETCGLIRPGQVVVDLGAVPGAWSQYVRRRFAPREAGVGGAAAGELNGRIIALDLLPFEPLEGVAFLQGDFCEEAVLAQLVGLLDGRAVDVVLSDMAPNLSGVEVTDAARIANLVELALEFAQSHLKPQGALVCKVFHGSGYSQLVDQFKRTFRVVKAVKPKASRDRSAETFLVGIGLKSTGMPNADAV.

S-adenosyl-L-methionine contacts are provided by G64, W66, D97, D113, and D138. Catalysis depends on K178, which acts as the Proton acceptor.

This sequence belongs to the class I-like SAM-binding methyltransferase superfamily. RNA methyltransferase RlmE family.

It localises to the cytoplasm. It carries out the reaction uridine(2552) in 23S rRNA + S-adenosyl-L-methionine = 2'-O-methyluridine(2552) in 23S rRNA + S-adenosyl-L-homocysteine + H(+). Its function is as follows. Specifically methylates the uridine in position 2552 of 23S rRNA at the 2'-O position of the ribose in the fully assembled 50S ribosomal subunit. This is Ribosomal RNA large subunit methyltransferase E from Leptothrix cholodnii (strain ATCC 51168 / LMG 8142 / SP-6) (Leptothrix discophora (strain SP-6)).